A 427-amino-acid chain; its full sequence is Glutamate-1-semialdehyde 2,1-aminomutase (427 aa).

At Lys265 the chain carries N6-(pyridoxal phosphate)lysine.

Belongs to the class-III pyridoxal-phosphate-dependent aminotransferase family. HemL subfamily. As to quaternary structure, homodimer. The cofactor is pyridoxal 5'-phosphate.

The protein resides in the cytoplasm. It carries out the reaction (S)-4-amino-5-oxopentanoate = 5-aminolevulinate. It functions in the pathway porphyrin-containing compound metabolism; protoporphyrin-IX biosynthesis; 5-aminolevulinate from L-glutamyl-tRNA(Glu): step 2/2. The protein is Glutamate-1-semialdehyde 2,1-aminomutase of Colwellia psychrerythraea (strain 34H / ATCC BAA-681) (Vibrio psychroerythus).